A 245-amino-acid polypeptide reads, in one-letter code: Biosynthetic peptidoglycan transglycosylase (245 aa).

Residues Leu-24 to Phe-44 traverse the membrane as a helical segment.

Belongs to the glycosyltransferase 51 family.

It is found in the cell inner membrane. It catalyses the reaction [GlcNAc-(1-&gt;4)-Mur2Ac(oyl-L-Ala-gamma-D-Glu-L-Lys-D-Ala-D-Ala)](n)-di-trans,octa-cis-undecaprenyl diphosphate + beta-D-GlcNAc-(1-&gt;4)-Mur2Ac(oyl-L-Ala-gamma-D-Glu-L-Lys-D-Ala-D-Ala)-di-trans,octa-cis-undecaprenyl diphosphate = [GlcNAc-(1-&gt;4)-Mur2Ac(oyl-L-Ala-gamma-D-Glu-L-Lys-D-Ala-D-Ala)](n+1)-di-trans,octa-cis-undecaprenyl diphosphate + di-trans,octa-cis-undecaprenyl diphosphate + H(+). It functions in the pathway cell wall biogenesis; peptidoglycan biosynthesis. Peptidoglycan polymerase that catalyzes glycan chain elongation from lipid-linked precursors. This Pectobacterium atrosepticum (strain SCRI 1043 / ATCC BAA-672) (Erwinia carotovora subsp. atroseptica) protein is Biosynthetic peptidoglycan transglycosylase.